Consider the following 348-residue polypeptide: Phenylalanine--tRNA ligase alpha subunit (348 aa).

Glutamate 268 is a binding site for Mg(2+).

The protein belongs to the class-II aminoacyl-tRNA synthetase family. Phe-tRNA synthetase alpha subunit type 1 subfamily. In terms of assembly, tetramer of two alpha and two beta subunits. Mg(2+) is required as a cofactor.

It is found in the cytoplasm. The catalysed reaction is tRNA(Phe) + L-phenylalanine + ATP = L-phenylalanyl-tRNA(Phe) + AMP + diphosphate + H(+). This Bordetella parapertussis (strain 12822 / ATCC BAA-587 / NCTC 13253) protein is Phenylalanine--tRNA ligase alpha subunit.